We begin with the raw amino-acid sequence, 286 residues long: Ribosomal RNA small subunit methyltransferase I (286 aa).

This sequence belongs to the methyltransferase superfamily. RsmI family.

It is found in the cytoplasm. It catalyses the reaction cytidine(1402) in 16S rRNA + S-adenosyl-L-methionine = 2'-O-methylcytidine(1402) in 16S rRNA + S-adenosyl-L-homocysteine + H(+). Functionally, catalyzes the 2'-O-methylation of the ribose of cytidine 1402 (C1402) in 16S rRNA. The chain is Ribosomal RNA small subunit methyltransferase I from Escherichia coli O157:H7.